We begin with the raw amino-acid sequence, 859 residues long: Envelope glycoprotein (859 aa).

Residues 1–6 (MVSIAF) constitute a propeptide that is removed on maturation. Residues 7–614 (YGGIPGGIST…KDLWSHIGNW (608 aa)) are Extracellular-facing. N-linked (GlcNAc...) asparagine; by host glycosylation is found at Asn40, Asn112, Asn141, Asn148, Asn186, Asn214, Asn233, Asn244, Asn340, Asn368, Asn399, Asn406, and Asn411. Residues 446–466 (FGISAIVAAIVAATAIAASAT) are fusion peptide. N-linked (GlcNAc...) asparagine; by host glycosylation is found at Asn483 and Asn490. The tract at residues 498-513 (LIERQIKILYAMILQT) is immunosuppression. N-linked (GlcNAc...) asparagine; by host glycans are attached at residues Asn550 and Asn557. Coiled coils occupy residues 576–624 (ILTT…SIIK) and 663–699 (KKFHHKHASREDTWDQAQHNIHLAGVTGGSGDKYYKQ). Residues 615-635 (IPGLGASIIKYIVMFLLIYLL) form a helical membrane-spanning segment. Topologically, residues 636 to 859 (LTSSPKILRA…TSHVSMPQYV (224 aa)) are cytoplasmic.

The mature envelope protein (Env) consists of a trimer of SU-TM heterodimers attached by noncovalent interactions or by a labile interchain disulfide bond. Post-translationally, specific enzymatic cleavages in vivo yield mature proteins. Envelope glycoproteins are synthesized as an inactive precursor that is N-glycosylated and processed likely by host cell furin or by a furin-like protease in the Golgi to yield the mature SU and TM proteins. The cleavage site between SU and TM requires the minimal sequence [KR]-X-[KR]-R.

It localises to the virion membrane. The protein localises to the host cell membrane. Its function is as follows. The surface protein (SU) attaches the virus to the host cell by binding to its receptor. This interaction triggers the refolding of the transmembrane protein (TM) and is thought to activate its fusogenic potential by unmasking its fusion peptide. Fusion occurs at the host cell plasma membrane. In terms of biological role, the transmembrane protein (TM) acts as a class I viral fusion protein. Under the current model, the protein has at least 3 conformational states: pre-fusion native state, pre-hairpin intermediate state, and post-fusion hairpin state. During viral and target cell membrane fusion, the coiled coil regions (heptad repeats) assume a trimer-of-hairpins structure, positioning the fusion peptide in close proximity to the C-terminal region of the ectodomain. The formation of this structure appears to drive apposition and subsequent fusion of viral and target cell membranes. Membranes fusion leads to delivery of the nucleocapsid into the cytoplasm. The polypeptide is Envelope glycoprotein (env) (Equine infectious anemia virus (isolate 1369) (EIAV)).